Reading from the N-terminus, the 242-residue chain is Probable transcriptional regulatory protein STH1004 (242 aa).

This sequence belongs to the TACO1 family.

The protein resides in the cytoplasm. This chain is Probable transcriptional regulatory protein STH1004, found in Symbiobacterium thermophilum (strain DSM 24528 / JCM 14929 / IAM 14863 / T).